A 528-amino-acid polypeptide reads, in one-letter code: Capsid scaffolding protein (528 aa).

Residues His46, Ser116, and His135 each act as charge relay system in the active site. The segment at His270–Gln288 is interaction with pAP. Residues Lys394 to Met431 are disordered. A Nuclear localization signal motif is present at residues Lys416 to Arg422. Positions Ser508–Ser528 are interaction with major capsid protein.

The protein belongs to the herpesviridae capsid scaffolding protein family. In terms of assembly, homomultimer. Interacts with major capsid protein. As to quaternary structure, exists in a monomer-dimer equilibrium with the dimer being the active species. Capsid scaffolding protein is cleaved by assemblin after formation of the spherical procapsid. As a result, the capsid obtains its mature, icosahedral shape. Cleavages occur at two or more sites: release (R-site) and maturation (M-site).

The protein resides in the host cytoplasm. Its subcellular location is the host nucleus. It carries out the reaction Cleaves -Ala-|-Ser- and -Ala-|-Ala- bonds in the scaffold protein.. Its function is as follows. Acts as a scaffold protein by binding major capsid protein in the cytoplasm, inducing the nuclear localization of both proteins. Multimerizes in the nucleus such as major capsid protein forms the icosahedral T=16 capsid. Autocatalytic cleavage releases the assembly protein, and subsequently abolishes interaction with major capsid protein. Cleavages products are evicted from the capsid before or during DNA packaging. Protease that plays an essential role in virion assembly within the nucleus. Catalyzes the cleavage of the assembly protein after formation of the spherical procapsid. By that cleavage, the capsid matures and gains its icosahedral shape. The cleavage sites seem to include -Ala-Ser-, -Ala-Ala-, as well as Ala-Thr bonds. Assemblin and cleavages products are evicted from the capsid before or during DNA packaging. Functionally, plays a major role in capsid assembly. Acts as a scaffold protein by binding major capsid protein. Multimerizes in the nucleus such as major capsid protein forms the icosahedral T=16 capsid. Cleaved by assemblin after capsid completion. The cleavages products are evicted from the capsid before or during DNA packaging. In Homo sapiens (Human), this protein is Capsid scaffolding protein (U53).